Reading from the N-terminus, the 459-residue chain is Endoglucanase EG-1 (459 aa).

An N-terminal signal peptide occupies residues 1–22 (MAPSVTLPLTTAILAIARLVAA). Gln23 bears the Pyrrolidone carboxylic acid mark. Residues 23 to 397 (QQPGTSTPEV…DIGSTTNSTA (375 aa)) are catalytic. Disulfide bonds link Cys41-Cys47, Cys71-Cys92, Cys82-Cys88, Cys161-Cys360, Cys193-Cys216, Cys197-Cys215, Cys236-Cys241, and Cys246-Cys315. Residue Asn78 is glycosylated (N-linked (GlcNAc) asparagine). N-linked (GlcNAc...) (high mannose) asparagine glycosylation occurs at Asn204. The active-site Nucleophile is the Glu218. Residue Glu223 is the Proton donor/acceptor of the active site. Positions 390–425 (GSTTNSTAPPPPPASSTTFSTTRRSSTTSSSPSCTQ) are disordered. Asn394 is a glycosylation site (N-linked (GlcNAc...) asparagine). The linker stretch occupies residues 398-423 (PPPPPASSTTFSTTRRSSTTSSSPSC). Residues 404–425 (SSTTFSTTRRSSTTSSSPSCTQ) show a composition bias toward low complexity. Cystine bridges form between Cys423/Cys439, Cys431/Cys448, and Cys442/Cys458. Positions 423 to 459 (CTQTHWGQCGGIGYSGCKTCTSGTTCQYSNDYYSQCL) constitute a CBM1 domain.

Belongs to the glycosyl hydrolase 7 (cellulase C) family. Post-translationally, asn-204 contains mainly a high-mannose-type glycan (Hex(7-9)GlcNAc(2)), with a small fraction (8%) bearing a single GlcNAc at this site.

The protein localises to the secreted. The enzyme catalyses Endohydrolysis of (1-&gt;4)-beta-D-glucosidic linkages in cellulose, lichenin and cereal beta-D-glucans.. Endoglucanase (EG) that cleaves the internal beta-1,4-glucosidic bonds in cellulose. The degradation of cellulose involves an interplay between different cellulolytic enzymes. Hydrolysis starts with EGs, which cut internal glycosidic linkages to reduce the polymerization degree of the substrate and creates new chain ends for exocellobiohydrolases (CBHs). The CBH release the disaccharide cellobiose from the non-reducing end of the cellulose polymer chain. Finally, beta-1,4-glucosidases hydrolyze the cellobiose and other short cello-oligosaccharides into glucose units. The protein is Endoglucanase EG-1 (egl1) of Hypocrea jecorina (Trichoderma reesei).